The sequence spans 389 residues: MVTRAGAGAAVAATAVVALLSAALALYRPPLDAVLERAFSLRKVHSIKDMENTLQLVRNIIPPLSSTKHKGQDGRIGVVGGCQEYTGAPYFAAISALKVGADLSHVFCASAAAPVIKAYSPELIVHPVLDSPSAVDEVEKWLPRLHALVFHCERGTQPGFLFWQGILEASKARDIPVVIDADGLWLVAQQPALIQGYQKAVLTPNHMEFSRLYDAVLRGPVDSDDRHGSVLRLSQALGNVTVVQKGERDILSNGQQVLVCSQEGSSRRCGGQGDLLSGSLGVLVHWALLAGPEKTNGGMLDLKLTIWGPKIETGIKTRAQGGCGPRTTAPTSPHLPLSPSPQVQPSPGGCIRRLLSHQAVQPPSLPEARSLHHHLRHDRRGGGRLPQAL.

The YjeF C-terminal domain maps to Thr-53–Leu-389. Position 85 is a phosphotyrosine (Tyr-85). Residues Glu-153 and Asn-205–Arg-211 each bind (6S)-NADPHX. Residues Lys-245–Asp-249 and Gly-264–Gly-273 contribute to the ATP site. Asp-274 is a (6S)-NADPHX binding site. Disordered stretches follow at residues Lys-316–Cys-350 and Arg-369–Leu-389.

This sequence belongs to the NnrD/CARKD family. It depends on Mg(2+) as a cofactor.

The protein localises to the mitochondrion. It carries out the reaction (6S)-NADHX + ATP = ADP + phosphate + NADH + H(+). The catalysed reaction is (6S)-NADPHX + ATP = ADP + phosphate + NADPH + H(+). Catalyzes the dehydration of the S-form of NAD(P)HX at the expense of ATP, which is converted to ADP. Together with NAD(P)HX epimerase, which catalyzes the epimerization of the S- and R-forms, the enzyme allows the repair of both epimers of NAD(P)HX, a damaged form of NAD(P)H that is a result of enzymatic or heat-dependent hydration. This is ATP-dependent (S)-NAD(P)H-hydrate dehydratase from Macaca mulatta (Rhesus macaque).